The following is a 427-amino-acid chain: V-type proton ATPase subunit C 2 (427 aa).

Positions 298-320 are disordered; sequence PLGNPARPAAGQTDRDRESEGEG.

This sequence belongs to the V-ATPase C subunit family. In terms of assembly, V-ATPase is a heteromultimeric enzyme made up of two complexes: the ATP-hydrolytic V1 complex and the proton translocation V0 complex. The V1 complex consists of three catalytic AB heterodimers that form a heterohexamer, three peripheral stalks each consisting of EG heterodimers, one central rotor including subunits D and F, and the regulatory subunits C and H. The proton translocation complex V0 consists of the proton transport subunit a, a ring of proteolipid subunits c9c'', rotary subunit d, subunits e and f, and the accessory subunits ATP6AP1/Ac45 and ATP6AP2/PRR. In terms of tissue distribution, predominantly expressed in the lung and kidney. Isoform 1 is lung-specific while isoform 3 is a kidney-specific isoform. Isoform 1 is localized in the lamellar bodies of type II alveolar cells. Isoform 2 is strongly expressed in the cortical and medulla collecting ducts and is found in the plasma membranes of renal alpha and beta intercalated cells.

Subunit of the V1 complex of vacuolar(H+)-ATPase (V-ATPase), a multisubunit enzyme composed of a peripheral complex (V1) that hydrolyzes ATP and a membrane integral complex (V0) that translocates protons. V-ATPase is responsible for acidifying and maintaining the pH of intracellular compartments and in some cell types, is targeted to the plasma membrane, where it is responsible for acidifying the extracellular environment. Subunit C is necessary for the assembly of the catalytic sector of the enzyme and is likely to have a specific function in its catalytic activity. The chain is V-type proton ATPase subunit C 2 (Atp6v1c2) from Mus musculus (Mouse).